The primary structure comprises 595 residues: Elongation factor 4 (595 aa).

Positions Glu-2–Lys-184 constitute a tr-type G domain. Residues Asp-14–Thr-19 and Asn-131–Asp-134 each bind GTP.

It belongs to the TRAFAC class translation factor GTPase superfamily. Classic translation factor GTPase family. LepA subfamily.

The protein localises to the cell membrane. It carries out the reaction GTP + H2O = GDP + phosphate + H(+). Required for accurate and efficient protein synthesis under certain stress conditions. May act as a fidelity factor of the translation reaction, by catalyzing a one-codon backward translocation of tRNAs on improperly translocated ribosomes. Back-translocation proceeds from a post-translocation (POST) complex to a pre-translocation (PRE) complex, thus giving elongation factor G a second chance to translocate the tRNAs correctly. Binds to ribosomes in a GTP-dependent manner. This Buchnera aphidicola subsp. Baizongia pistaciae (strain Bp) protein is Elongation factor 4.